The primary structure comprises 128 residues: Glycine cleavage system H protein (128 aa).

The Lipoyl-binding domain maps to 25–107; sequence TITVGITHHA…YGAGWFFKIK (83 aa). The residue at position 66 (lysine 66) is an N6-lipoyllysine.

The protein belongs to the GcvH family. In terms of assembly, the glycine cleavage system is composed of four proteins: P, T, L and H. Requires (R)-lipoate as cofactor.

The glycine cleavage system catalyzes the degradation of glycine. The H protein shuttles the methylamine group of glycine from the P protein to the T protein. The sequence is that of Glycine cleavage system H protein from Neisseria meningitidis serogroup C (strain 053442).